A 217-amino-acid polypeptide reads, in one-letter code: DNA transformation protein TfoX (217 aa).

The protein belongs to the Sxy/TfoX family.

Required for DNA transformation. Positively regulates genes required for DNA transformation (late competence-specific genes) in association with CRP. Required for expression of the late competence-specific gene, com101A. Required for expression of the dprABC operon. The protein is DNA transformation protein TfoX of Haemophilus influenzae (strain ATCC 51907 / DSM 11121 / KW20 / Rd).